The following is a 464-amino-acid chain: Soluble pyridine nucleotide transhydrogenase (464 aa).

Residue 35–44 coordinates FAD; sequence DDRPQVGGNC.

Belongs to the class-I pyridine nucleotide-disulfide oxidoreductase family. The cofactor is FAD.

It is found in the cytoplasm. It carries out the reaction NAD(+) + NADPH = NADH + NADP(+). Its function is as follows. Conversion of NADPH, generated by peripheral catabolic pathways, to NADH, which can enter the respiratory chain for energy generation. This Azotobacter vinelandii (strain DJ / ATCC BAA-1303) protein is Soluble pyridine nucleotide transhydrogenase.